The following is a 104-amino-acid chain: Putative pterin-4-alpha-carbinolamine dehydratase (104 aa).

It belongs to the pterin-4-alpha-carbinolamine dehydratase family.

The catalysed reaction is (4aS,6R)-4a-hydroxy-L-erythro-5,6,7,8-tetrahydrobiopterin = (6R)-L-erythro-6,7-dihydrobiopterin + H2O. This Rhizobium meliloti (strain 1021) (Ensifer meliloti) protein is Putative pterin-4-alpha-carbinolamine dehydratase (pcbD).